The sequence spans 228 residues: ATP synthase F(0) complex subunit a (228 aa).

Helical transmembrane passes span 13 to 33, 69 to 89, 98 to 118, 139 to 159, and 194 to 214; these read NILA…IFPM, WALI…LGLL, QLSM…LIGL, IPTL…ALGV, and ILLF…ALVF.

It belongs to the ATPase A chain family. In terms of assembly, component of the ATP synthase complex composed at least of ATP5F1A/subunit alpha, ATP5F1B/subunit beta, ATP5MC1/subunit c (homooctomer), MT-ATP6/subunit a, MT-ATP8/subunit 8, ATP5ME/subunit e, ATP5MF/subunit f, ATP5MG/subunit g, ATP5MK/subunit k, ATP5MJ/subunit j, ATP5F1C/subunit gamma, ATP5F1D/subunit delta, ATP5F1E/subunit epsilon, ATP5PF/subunit F6, ATP5PB/subunit b, ATP5PD/subunit d, ATP5PO/subunit OSCP. ATP synthase complex consists of a soluble F(1) head domain (subunits alpha(3) and beta(3)) - the catalytic core - and a membrane F(0) domain - the membrane proton channel (subunits c, a, 8, e, f, g, k and j). These two domains are linked by a central stalk (subunits gamma, delta, and epsilon) rotating inside the F1 region and a stationary peripheral stalk (subunits F6, b, d, and OSCP). Interacts with DNAJC30; interaction is direct.

Its subcellular location is the mitochondrion inner membrane. It carries out the reaction H(+)(in) = H(+)(out). Functionally, subunit a, of the mitochondrial membrane ATP synthase complex (F(1)F(0) ATP synthase or Complex V) that produces ATP from ADP in the presence of a proton gradient across the membrane which is generated by electron transport complexes of the respiratory chain. ATP synthase complex consist of a soluble F(1) head domain - the catalytic core - and a membrane F(1) domain - the membrane proton channel. These two domains are linked by a central stalk rotating inside the F(1) region and a stationary peripheral stalk. During catalysis, ATP synthesis in the catalytic domain of F(1) is coupled via a rotary mechanism of the central stalk subunits to proton translocation. With the subunit c (ATP5MC1), forms the proton-conducting channel in the F(0) domain, that contains two crucial half-channels (inlet and outlet) that facilitate proton movement from the mitochondrial intermembrane space (IMS) into the matrix. Protons are taken up via the inlet half-channel and released through the outlet half-channel, following a Grotthuss mechanism. This chain is ATP synthase F(0) complex subunit a, found in Pelomedusa subrufa (African side-necked turtle).